The chain runs to 584 residues: Pectinesterase 1 (584 aa).

Residues 1–42 form the signal peptide; that stretch reads MTHIKEFFTKLSESSSNQNISNIPKKKKKLFLALFATLLVVA. Asn-108, Asn-129, and Asn-226 each carry an N-linked (GlcNAc...) asparagine glycan. The substrate site is built by Thr-348 and Gln-378. The active-site Proton donor is the Asp-401. Cys-415 and Cys-435 are oxidised to a cystine. Asp-422 functions as the Nucleophile in the catalytic mechanism. Residues Arg-490 and Trp-492 each coordinate substrate.

In the N-terminal section; belongs to the PMEI family. The protein in the C-terminal section; belongs to the pectinesterase family. In terms of tissue distribution, expressed at high levels in flower buds, shoots and young leaves, and at lower levels in young fruit, young bark and juice vesicles. Not expressed at significant levels in leaf abscission zones following ethylene treatment or in mature leaves. In fruit abscission zones, expression was initially undetectable but increased markedly following ethylene treatment.

The protein resides in the secreted. The protein localises to the cell wall. It catalyses the reaction [(1-&gt;4)-alpha-D-galacturonosyl methyl ester](n) + n H2O = [(1-&gt;4)-alpha-D-galacturonosyl](n) + n methanol + n H(+). Its pathway is glycan metabolism; pectin degradation; 2-dehydro-3-deoxy-D-gluconate from pectin: step 1/5. Its function is as follows. Acts in the modification of cell walls via demethylesterification of cell wall pectin. The polypeptide is Pectinesterase 1 (PECS-1.1) (Citrus sinensis (Sweet orange)).